We begin with the raw amino-acid sequence, 1216 residues long: ATP-dependent helicase/nuclease subunit A (1216 aa).

Positions 26–488 (QKKTAEQIEA…ILLKANFRSS (463 aa)) constitute a UvrD-like helicase ATP-binding domain. Residue 47–54 (ASAGSGKT) participates in ATP binding. Positions 515–802 (KHQLVFANTK…ELMTIHKSKG (288 aa)) constitute a UvrD-like helicase C-terminal domain.

It belongs to the helicase family. AddA subfamily. As to quaternary structure, heterodimer of AddA and AddB/RexB. Mg(2+) is required as a cofactor.

The enzyme catalyses Couples ATP hydrolysis with the unwinding of duplex DNA by translocating in the 3'-5' direction.. It carries out the reaction ATP + H2O = ADP + phosphate + H(+). Its function is as follows. The heterodimer acts as both an ATP-dependent DNA helicase and an ATP-dependent, dual-direction single-stranded exonuclease. Recognizes the chi site generating a DNA molecule suitable for the initiation of homologous recombination. The AddA nuclease domain is required for chi fragment generation; this subunit has the helicase and 3' -&gt; 5' nuclease activities. This Streptococcus pneumoniae (strain ATCC 700669 / Spain 23F-1) protein is ATP-dependent helicase/nuclease subunit A.